A 114-amino-acid chain; its full sequence is MENRCSNPCYIQSDPSDLLSLRLPARFCWPFSRSSRIFQGSSRRRILSEGKNASKACFVRIFGMAKVSKAISRSRSRLLFRSLPPHPACLFEYQISSSSLFHHPFLLWQGQVFF.

This is an uncharacterized protein from Saccharomyces cerevisiae (strain ATCC 204508 / S288c) (Baker's yeast).